The chain runs to 156 residues: ATP synthase subunit b (156 aa).

A helical transmembrane segment spans residues 7–27 (LIGQTVAFIIFVWFCMKFVWP).

Belongs to the ATPase B chain family. As to quaternary structure, F-type ATPases have 2 components, F(1) - the catalytic core - and F(0) - the membrane proton channel. F(1) has five subunits: alpha(3), beta(3), gamma(1), delta(1), epsilon(1). F(0) has three main subunits: a(1), b(2) and c(10-14). The alpha and beta chains form an alternating ring which encloses part of the gamma chain. F(1) is attached to F(0) by a central stalk formed by the gamma and epsilon chains, while a peripheral stalk is formed by the delta and b chains.

It is found in the cell inner membrane. Its function is as follows. F(1)F(0) ATP synthase produces ATP from ADP in the presence of a proton or sodium gradient. F-type ATPases consist of two structural domains, F(1) containing the extramembraneous catalytic core and F(0) containing the membrane proton channel, linked together by a central stalk and a peripheral stalk. During catalysis, ATP synthesis in the catalytic domain of F(1) is coupled via a rotary mechanism of the central stalk subunits to proton translocation. Functionally, component of the F(0) channel, it forms part of the peripheral stalk, linking F(1) to F(0). The polypeptide is ATP synthase subunit b (Shewanella sp. (strain MR-4)).